The chain runs to 47 residues: Packaging protein P22 (47 aa).

The helical transmembrane segment at 22-42 threads the bilayer; it reads TGWLAFVGLIIVAIILWQQII.

In terms of assembly, heterodimer of P20 and P22; further multimerizes as hexamers of heterodimers. Part of the dodecameric portal complex that is composed of the packaging efficiency factor P6, the DNA packaging ATPase P9, and the internal heterododecamer P20/P22 which spans the virion inner membrane.

It is found in the virion membrane. In terms of biological role, together with P22, forms the internal part of the portal complex embeded in the virion internal membrane and which plays critical roles in genome packaging and genome ejection. Both proteins multimerize as a single ring-shaped heterdodecamer arranged around a central channel and interact with the P6/P9 external part of the portal. The sequence is that of Packaging protein P22 (XXII) from Enterobacteria phage PRD1 (Bacteriophage PRD1).